Consider the following 318-residue polypeptide: Taste receptor type 2 member 7 (318 aa).

Over 1 to 9 (MTDKVQTTL) the chain is Extracellular. Residues 10–30 (LFLAVGEFSVGILGNAFIGLV) form a helical membrane-spanning segment. Residues 31–55 (NCMDWIKKRKIASIDLILTSLAISR) lie on the Cytoplasmic side of the membrane. Residues 56–76 (ICLLCVILLDCFILVLYPDVY) form a helical membrane-spanning segment. The Extracellular segment spans residues 77 to 94 (ATGKEMRIIDFFWILTNH). A helical membrane pass occupies residues 95–115 (LSIWFATCLSIYYFFKIANFF). The Cytoplasmic portion of the chain corresponds to 116–128 (HPLFLWMKWRIDR). A helical transmembrane segment spans residues 129 to 149 (VISWILLGCMVLSVFISLPAT). At 150–187 (ENLNADFRFCVKAKRKTNLTWSCRVNKTQHASIKLLLN) the chain is on the extracellular side. 2 N-linked (GlcNAc...) asparagine glycosylation sites follow: asparagine 167 and asparagine 175. Residues 188-208 (LATLLPFCVCLMSFFLLILSL) form a helical membrane-spanning segment. At 209-235 (RRHIRRMQLSATGCRDPSTEAHVRALK) the chain is on the cytoplasmic side. Residues 236–256 (AVISFLLLFIAYYLSFLIATS) form a helical membrane-spanning segment. Topologically, residues 257–266 (SYFMPETELA) are extracellular. A helical transmembrane segment spans residues 267-287 (VIFGESIALIYPSSHSFILIL). The Cytoplasmic portion of the chain corresponds to 288–318 (GNNKLRHASLKVIWKVMSILKGRKFQQHKQI).

Belongs to the G-protein coupled receptor T2R family.

The protein localises to the membrane. Its function is as follows. Gustducin-coupled receptor implicated in the perception of bitter compounds in the oral cavity and the gastrointestinal tract. Signals through PLCB2 and the calcium-regulated cation channel TRPM5. The polypeptide is Taste receptor type 2 member 7 (TAS2R7) (Pongo pygmaeus (Bornean orangutan)).